The chain runs to 189 residues: Ribonuclease HII (189 aa).

An RNase H type-2 domain is found at 1–189 (MIAGVDEAGR…IAALLKNNKK (189 aa)). A divalent metal cation-binding residues include aspartate 6, glutamate 7, and aspartate 98.

The protein belongs to the RNase HII family. Requires Mn(2+) as cofactor. Mg(2+) is required as a cofactor.

Its subcellular location is the cytoplasm. It carries out the reaction Endonucleolytic cleavage to 5'-phosphomonoester.. Its function is as follows. Endonuclease that specifically degrades the RNA of RNA-DNA hybrids. The polypeptide is Ribonuclease HII (Dichelobacter nodosus (strain VCS1703A)).